The chain runs to 80 residues: Cell division activator CedA (80 aa).

This sequence belongs to the CedA family.

Functionally, activates the cell division inhibited by chromosomal DNA over-replication. The chain is Cell division activator CedA from Citrobacter koseri (strain ATCC BAA-895 / CDC 4225-83 / SGSC4696).